A 146-amino-acid chain; its full sequence is Hemoglobin subunit beta (146 aa).

The 145-residue stretch at 2–146 (EWTDFERATI…VVNSLGRQYH (145 aa)) folds into the Globin domain. Residues H63 and H92 each contribute to the heme b site.

It belongs to the globin family. In terms of assembly, heterotetramer of two alpha chains and two beta chains. Can form polymers. As to expression, red blood cells.

Functionally, involved in oxygen transport from gills to the various peripheral tissues. The chain is Hemoglobin subunit beta (hbb) from Chelidonichthys kumu (Bluefin gurnard).